Here is a 158-residue protein sequence, read N- to C-terminus: MTYLQRVTNCVLQTDDKVLLLQKPRRGWWVAPGGKMESGESVRDSVIREYREETGIYIINPQLKGVFTFIIKDGDHIVSEWMMFTFVADSYTGQNVSESEEGKLQWHDVNDIQNLPMAPGDGHILDFMMKGQGLLHGTFTYTPEFELLSYRLDPQHIK.

In terms of domain architecture, Nudix hydrolase spans 3 to 130; sequence YLQRVTNCVL…DGHILDFMMK (128 aa). The Nudix box motif lies at 34 to 55; that stretch reads GKMESGESVRDSVIREYREETG. The Mg(2+) site is built by E49 and E53.

Belongs to the Nudix hydrolase family. Mg(2+) is required as a cofactor.

This is an uncharacterized protein from Bacillus subtilis (strain 168).